The sequence spans 506 residues: Maturase K (506 aa).

This sequence belongs to the intron maturase 2 family. MatK subfamily.

It localises to the plastid. The protein resides in the chloroplast. In terms of biological role, usually encoded in the trnK tRNA gene intron. Probably assists in splicing its own and other chloroplast group II introns. In Manihot esculenta (Cassava), this protein is Maturase K.